The primary structure comprises 243 residues: UPF0246 protein gbs2036 (243 aa).

This sequence belongs to the UPF0246 family.

This chain is UPF0246 protein gbs2036, found in Streptococcus agalactiae serotype III (strain NEM316).